The following is a 432-amino-acid chain: Phosphomethylpyrimidine synthase (432 aa).

Substrate-binding positions include Asn-66, Met-95, Tyr-124, His-163, 185 to 187 (SRG), 226 to 229 (DGLR), and Glu-265. Residue His-269 coordinates Zn(2+). Residue Tyr-292 participates in substrate binding. Zn(2+) is bound at residue His-333. Residues Cys-409, Cys-412, and Cys-416 each contribute to the [4Fe-4S] cluster site.

The protein belongs to the ThiC family. The cofactor is [4Fe-4S] cluster.

It carries out the reaction 5-amino-1-(5-phospho-beta-D-ribosyl)imidazole + S-adenosyl-L-methionine = 4-amino-2-methyl-5-(phosphooxymethyl)pyrimidine + CO + 5'-deoxyadenosine + formate + L-methionine + 3 H(+). The protein operates within cofactor biosynthesis; thiamine diphosphate biosynthesis. In terms of biological role, catalyzes the synthesis of the hydroxymethylpyrimidine phosphate (HMP-P) moiety of thiamine from aminoimidazole ribotide (AIR) in a radical S-adenosyl-L-methionine (SAM)-dependent reaction. The protein is Phosphomethylpyrimidine synthase of Caldanaerobacter subterraneus subsp. tengcongensis (strain DSM 15242 / JCM 11007 / NBRC 100824 / MB4) (Thermoanaerobacter tengcongensis).